The chain runs to 137 residues: MADEDDYQDMDNDDFVDDNEMEDVIEEDPQRPDNEDEDDDNVDENFELFDQGKAVPTSEHVTTPFMTKYERARVLGTRALQIAMGAPVMVELEGETDPLEIARKELKQRRIPIIVRRYLPDGSYEDWPTDQLQLADW.

Composition is skewed to acidic residues over residues 1–27 (MADEDDYQDMDNDDFVDDNEMEDVIEE) and 34–43 (NEDEDDDNVD). Positions 1 to 43 (MADEDDYQDMDNDDFVDDNEMEDVIEEDPQRPDNEDEDDDNVD) are disordered.

Belongs to the archaeal Rpo6/eukaryotic RPB6 RNA polymerase subunit family. In terms of assembly, component of the RNA polymerase I (Pol I), RNA polymerase II (Pol II) and RNA polymerase III (Pol III) complexes consisting of at least 13, 12 and 17 subunits, respectively.

Its subcellular location is the nucleus. Its function is as follows. DNA-dependent RNA polymerases catalyze the transcription of DNA into RNA using the four ribonucleoside triphosphates as substrates. Common component of RNA polymerases I, II and III which synthesize ribosomal RNA precursors, mRNA precursors and many functional non-coding RNAs, and small RNAs, such as 5S rRNA and tRNAs, respectively. Pol II is the central component of the basal RNA polymerase II transcription machinery. Pols are composed of mobile elements that move relative to each other. In Pol II, RPB6 is part of the clamp element and together with parts of RPB1 and RPB2 forms a pocket to which the RPB4-RPB7 subcomplex binds. The chain is Probable DNA-directed RNA polymerases I, II, and III subunit RPABC2 (rpb-6) from Caenorhabditis elegans.